Here is a 307-residue protein sequence, read N- to C-terminus: tRNA pseudouridine synthase B (307 aa).

Aspartate 38 functions as the Nucleophile in the catalytic mechanism.

Belongs to the pseudouridine synthase TruB family. Type 1 subfamily.

The catalysed reaction is uridine(55) in tRNA = pseudouridine(55) in tRNA. In terms of biological role, responsible for synthesis of pseudouridine from uracil-55 in the psi GC loop of transfer RNAs. The sequence is that of tRNA pseudouridine synthase B from Lachnoclostridium phytofermentans (strain ATCC 700394 / DSM 18823 / ISDg) (Clostridium phytofermentans).